The chain runs to 307 residues: tRNA dimethylallyltransferase 2 (307 aa).

An ATP-binding site is contributed by 11–18 (GPTASGKT). Residue 13-18 (TASGKT) coordinates substrate. Residues 36–39 (DSRQ) are interaction with substrate tRNA.

The protein belongs to the IPP transferase family. Monomer. Mg(2+) serves as cofactor.

It catalyses the reaction adenosine(37) in tRNA + dimethylallyl diphosphate = N(6)-dimethylallyladenosine(37) in tRNA + diphosphate. Catalyzes the transfer of a dimethylallyl group onto the adenine at position 37 in tRNAs that read codons beginning with uridine, leading to the formation of N6-(dimethylallyl)adenosine (i(6)A). In Phocaeicola vulgatus (strain ATCC 8482 / DSM 1447 / JCM 5826 / CCUG 4940 / NBRC 14291 / NCTC 11154) (Bacteroides vulgatus), this protein is tRNA dimethylallyltransferase 2.